The chain runs to 63 residues: Small, acid-soluble spore protein H 2 (63 aa).

This sequence belongs to the SspH family.

It is found in the spore core. In Clostridium botulinum (strain ATCC 19397 / Type A), this protein is Small, acid-soluble spore protein H 2.